The following is a 735-amino-acid chain: Alpha-adducin (735 aa).

At Met1 the chain carries N-acetylmethionine. Residues Met1–Thr11 show a composition bias toward low complexity. The segment at Met1–Lys21 is disordered. A Phosphoserine modification is found at Ser12. Ser59 bears the Phosphoserine; by PKA mark. Ser64 is modified (phosphoserine). A Phosphothreonine modification is found at Thr331. Ser334, Ser353, and Ser355 each carry phosphoserine. Thr358 is modified (phosphothreonine). Phosphoserine occurs at positions 364 and 366. Ser408 carries the phosphoserine; by PKA modification. 2 disordered regions span residues Gly418–Pro486 and Arg576–Ser735. At Ser427 the chain carries Phosphoserine. At Thr429 the chain carries Phosphothreonine. Ser431 is subject to Phosphoserine. Ser436 carries the phosphoserine; by PKA modification. Phosphothreonine; by ROCK2 is present on Thr445. 2 positions are modified to phosphoserine: Ser464 and Ser465. Position 480 is a phosphothreonine; by ROCK2 (Thr480). Ser481 is subject to Phosphoserine; by PKA. Over residues Arg576–Pro601 the composition is skewed to basic and acidic residues. 3 positions are modified to phosphoserine: Ser586, Ser600, and Ser605. At Thr610 the chain carries Phosphothreonine. Ser613 bears the Phosphoserine mark. Residue Thr614 is modified to Phosphothreonine. Low complexity predominate over residues Glu678–Ser712. 3 positions are modified to phosphoserine: Ser705, Ser708, and Ser712. A compositionally biased stretch (basic residues) spans Pro713–Ser735. Ser714 carries the phosphoserine; by PKC modification. Residues Lys715–Lys732 form an interaction with calmodulin region. The residue at position 724 (Ser724) is a Phosphoserine; by PKA and PKC.

The protein belongs to the aldolase class II family. Adducin subfamily. In terms of assembly, heterodimer of an alpha and a beta subunit or an alpha and a gamma subunit.

Its subcellular location is the cytoplasm. The protein resides in the cytoskeleton. The protein localises to the cell membrane. Its function is as follows. Membrane-cytoskeleton-associated protein that promotes the assembly of the spectrin-actin network. Binds to calmodulin. The chain is Alpha-adducin (Add1) from Rattus norvegicus (Rat).